The chain runs to 215 residues: Large ribosomal subunit protein uL3 (215 aa).

Gln156 carries the post-translational modification N5-methylglutamine.

The protein belongs to the universal ribosomal protein uL3 family. In terms of assembly, part of the 50S ribosomal subunit. Forms a cluster with proteins L14 and L19. Post-translationally, methylated by PrmB.

Functionally, one of the primary rRNA binding proteins, it binds directly near the 3'-end of the 23S rRNA, where it nucleates assembly of the 50S subunit. In Xylella fastidiosa (strain 9a5c), this protein is Large ribosomal subunit protein uL3.